Here is an 882-residue protein sequence, read N- to C-terminus: MTKQLTLFDIPSSKPAKSEQNTQQSQQSAPVEEKKVVRREWLEEAQENKIYFLLQVDYDGKKGKAVCKLFDKETQKIYALYDNTGHKPYFLVDLEPDKVGKIPKIVRDPSFDHIETVSKIDPYTWNKFKLTKIVVRDPLAVRRLRNDVPKAYEAHIKYFNNYMYDIGLIPGMPYVVKNGKLESVYLSLDEKDVEEIKKAFADSDEMTRQMAVDWLPIFETEIPKIKRVAIDIEVYTPVKGRIPDSQKAEFPIISIALAGSDGLKKVLVLNRNDVNEGSVKLDGISVERFNTEYELLGRFFDILLEYPIVLTFNGDDFDLPYIYFRALKLGYFPEEIPIDVAGKDEAKYLAGLHIDLYKFFFNKAVRNYAFEGKYNEYNLDAVAKALLGTSKVKVDTLISFLDVEKLIEYNFRDAEITLQLTTFNNDLTMKLIVLFSRISRLGIEELTRTEISTWVKNLYYWEHRKRNWLIPLKEEILAKSSNIRTSALIKGKGYKGAVVIDPPAGIFFNITVLDFASLYPSIIRTWNLSYETVDIQQCKKPYEVKDETGEVLHIVCMDRPGITAVITGLLRDFRVKIYKKKAKNPNNSEEQKLLYDVVQRAMKVFINATYGVFGAETFPLYAPAVAESVTALGRYVITSTVKKAREEGLTVLYGDTDSLFLLNPPKNSLENIIKWVKTTFNLDLEVDKTYKFVAFSGLKKNYFGVYQDGKVDIKGMLVKKRNTPEFVKKVFNEVKELMISINSPNDVKEIKRKIVDVVKGSYEKLKNKGYNLDELAFKVMLSKPLDAYKKNTPQHVKAALQLRPFGVNVLPRDIIYYVKVRSKDGVKPVQLAKVTEIDAEKYLEALRSTFEQILRAFGVSWDEIAATMSIDSFFSYPSKGNS.

Positions methionine 1 to valine 31 are disordered. A compositionally biased stretch (polar residues) spans serine 18–alanine 29.

This sequence belongs to the DNA polymerase type-B family. As to quaternary structure, interacts with PCNA subunit PCNA2 and weakly with PCNA3.

The catalysed reaction is DNA(n) + a 2'-deoxyribonucleoside 5'-triphosphate = DNA(n+1) + diphosphate. With respect to regulation, DNA synthesis is stimulated by PCNA heterotrimers. Its function is as follows. This polymerase possesses two enzymatic activities: DNA synthesis (polymerase) and an exonucleolytic activity that degrades single-stranded DNA in the 3'- to 5'-direction. DNA polymerase I, DNA ligase and the flap endonuclease may be constitutively associated with the PCNA heterotrimer forming a scanning complex able to couple DNA synthesis and Okazaki fragment maturation. The sequence is that of DNA polymerase 1 (dpo1) from Saccharolobus solfataricus (strain ATCC 35092 / DSM 1617 / JCM 11322 / P2) (Sulfolobus solfataricus).